The chain runs to 244 residues: tRNA pseudouridine synthase A (244 aa).

Aspartate 52 (nucleophile) is an active-site residue. Tyrosine 110 provides a ligand contact to substrate.

The protein belongs to the tRNA pseudouridine synthase TruA family. Homodimer.

It catalyses the reaction uridine(38/39/40) in tRNA = pseudouridine(38/39/40) in tRNA. Formation of pseudouridine at positions 38, 39 and 40 in the anticodon stem and loop of transfer RNAs. This is tRNA pseudouridine synthase A from Acetivibrio thermocellus (strain ATCC 27405 / DSM 1237 / JCM 9322 / NBRC 103400 / NCIMB 10682 / NRRL B-4536 / VPI 7372) (Clostridium thermocellum).